The following is a 377-amino-acid chain: Nitric oxide reductase FlRd-NAD(+) reductase (377 aa).

The protein belongs to the FAD-dependent oxidoreductase family. Requires FAD as cofactor.

It is found in the cytoplasm. The catalysed reaction is 2 reduced [nitric oxide reductase rubredoxin domain] + NAD(+) + H(+) = 2 oxidized [nitric oxide reductase rubredoxin domain] + NADH. Its pathway is nitrogen metabolism; nitric oxide reduction. One of at least two accessory proteins for anaerobic nitric oxide (NO) reductase. Reduces the rubredoxin moiety of NO reductase. The polypeptide is Nitric oxide reductase FlRd-NAD(+) reductase (Klebsiella pneumoniae subsp. pneumoniae (strain ATCC 700721 / MGH 78578)).